Here is a 239-residue protein sequence, read N- to C-terminus: Purine nucleoside phosphorylase DeoD-type (239 aa).

A purine D-ribonucleoside is bound at residue His-5. Phosphate is bound by residues Gly-21, Arg-25, Arg-44, and 88–91 (RVGS). Residues 180–182 (EME) and 204–205 (SD) each bind a purine D-ribonucleoside. The active-site Proton donor is Asp-205.

The protein belongs to the PNP/UDP phosphorylase family. In terms of assembly, homohexamer; trimer of homodimers.

The enzyme catalyses a purine D-ribonucleoside + phosphate = a purine nucleobase + alpha-D-ribose 1-phosphate. The catalysed reaction is a purine 2'-deoxy-D-ribonucleoside + phosphate = a purine nucleobase + 2-deoxy-alpha-D-ribose 1-phosphate. In terms of biological role, catalyzes the reversible phosphorolytic breakdown of the N-glycosidic bond in the beta-(deoxy)ribonucleoside molecules, with the formation of the corresponding free purine bases and pentose-1-phosphate. This Salmonella choleraesuis (strain SC-B67) protein is Purine nucleoside phosphorylase DeoD-type.